We begin with the raw amino-acid sequence, 562 residues long: 2-succinyl-5-enolpyruvyl-6-hydroxy-3-cyclohexene-1-carboxylate synthase (562 aa).

It belongs to the TPP enzyme family. MenD subfamily. As to quaternary structure, homodimer. Mg(2+) is required as a cofactor. The cofactor is Mn(2+). It depends on thiamine diphosphate as a cofactor.

It carries out the reaction isochorismate + 2-oxoglutarate + H(+) = 5-enolpyruvoyl-6-hydroxy-2-succinyl-cyclohex-3-ene-1-carboxylate + CO2. Its pathway is quinol/quinone metabolism; 1,4-dihydroxy-2-naphthoate biosynthesis; 1,4-dihydroxy-2-naphthoate from chorismate: step 2/7. The protein operates within cofactor biosynthesis; phylloquinone biosynthesis. Its function is as follows. Catalyzes the thiamine diphosphate-dependent decarboxylation of 2-oxoglutarate and the subsequent addition of the resulting succinic semialdehyde-thiamine pyrophosphate anion to isochorismate to yield 2-succinyl-5-enolpyruvyl-6-hydroxy-3-cyclohexene-1-carboxylate (SEPHCHC). The sequence is that of 2-succinyl-5-enolpyruvyl-6-hydroxy-3-cyclohexene-1-carboxylate synthase from Thermosynechococcus vestitus (strain NIES-2133 / IAM M-273 / BP-1).